Reading from the N-terminus, the 234-residue chain is Leucyl/phenylalanyl-tRNA--protein transferase (234 aa).

The protein belongs to the L/F-transferase family.

Its subcellular location is the cytoplasm. The enzyme catalyses N-terminal L-lysyl-[protein] + L-leucyl-tRNA(Leu) = N-terminal L-leucyl-L-lysyl-[protein] + tRNA(Leu) + H(+). It carries out the reaction N-terminal L-arginyl-[protein] + L-leucyl-tRNA(Leu) = N-terminal L-leucyl-L-arginyl-[protein] + tRNA(Leu) + H(+). The catalysed reaction is L-phenylalanyl-tRNA(Phe) + an N-terminal L-alpha-aminoacyl-[protein] = an N-terminal L-phenylalanyl-L-alpha-aminoacyl-[protein] + tRNA(Phe). Its function is as follows. Functions in the N-end rule pathway of protein degradation where it conjugates Leu, Phe and, less efficiently, Met from aminoacyl-tRNAs to the N-termini of proteins containing an N-terminal arginine or lysine. This chain is Leucyl/phenylalanyl-tRNA--protein transferase, found in Pectobacterium atrosepticum (strain SCRI 1043 / ATCC BAA-672) (Erwinia carotovora subsp. atroseptica).